The following is a 914-amino-acid chain: Eukaryotic translation initiation factor 3 subunit C-like protein (914 aa).

Positions M1–D44 are disordered. Low complexity predominate over residues G8–E21. Residues S9, S11, S13, S15, S16, S18, and S39 each carry the phosphoserine modification. The residue at position 99 (K99) is an N6-acetyllysine. Disordered stretches follow at residues T157 to W302 and Q523 to E543. Phosphoserine is present on residues S166, S178, S181, and S182. Residues S166–G190 show a composition bias toward acidic residues. Over residues K199–D216 the composition is skewed to basic and acidic residues. Over residues D217–D232 the composition is skewed to acidic residues. Positions P261–A278 are enriched in basic and acidic residues. Residues E291 to G300 are compositionally biased toward acidic residues. Polar residues predominate over residues Q523–K532. T525 carries the post-translational modification Phosphothreonine. Position 644 is an N6-acetyllysine (K644). In terms of domain architecture, PCI spans F674–P850. The interval F886–Y914 is disordered. Over residues R887 to M900 the composition is skewed to basic and acidic residues. S910 carries the post-translational modification Phosphoserine.

Belongs to the eIF-3 subunit C family. Component of the eukaryotic translation initiation factor 3 (eIF-3) complex, which is composed of 13 subunits: EIF3A, EIF3B, EIF3C, EIF3D, EIF3E, EIF3F, EIF3G, EIF3H, EIF3I, EIF3J, EIF3K, EIF3L and EIF3M. The eIF-3 complex appears to include 3 stable modules: module A is composed of EIF3A, EIF3B, EIF3G and EIF3I; module B is composed of EIF3F, EIF3H, and EIF3M; and module C is composed of EIF3C, EIF3D, EIF3E, EIF3K and EIF3L. EIF3C of module C binds EIF3B of module A and EIF3H of module B, thereby linking the three modules. EIF3J is a labile subunit that binds to the eIF-3 complex via EIF3B. The eIF-3 complex interacts with RPS6KB1 under conditions of nutrient depletion. Mitogenic stimulation leads to binding and activation of a complex composed of MTOR and RPTOR, leading to phosphorylation and release of RPS6KB1 and binding of EIF4B to eIF-3. Post-translationally, phosphorylated. Phosphorylation is enhanced upon serum stimulation.

The protein localises to the cytoplasm. In terms of biological role, component of the eukaryotic translation initiation factor 3 (eIF-3) complex, which is required for several steps in the initiation of protein synthesis. The eIF-3 complex associates with the 40S ribosome and facilitates the recruitment of eIF-1, eIF-1A, eIF-2:GTP:methionyl-tRNAi and eIF-5 to form the 43S pre-initiation complex (43S PIC). The eIF-3 complex stimulates mRNA recruitment to the 43S PIC and scanning of the mRNA for AUG recognition. The eIF-3 complex is also required for disassembly and recycling of post-termination ribosomal complexes and subsequently prevents premature joining of the 40S and 60S ribosomal subunits prior to initiation. The eIF-3 complex specifically targets and initiates translation of a subset of mRNAs involved in cell proliferation, including cell cycling, differentiation and apoptosis, and uses different modes of RNA stem-loop binding to exert either translational activation or repression. This Homo sapiens (Human) protein is Eukaryotic translation initiation factor 3 subunit C-like protein (EIF3CL).